A 100-amino-acid polypeptide reads, in one-letter code: Aspartyl/glutamyl-tRNA(Asn/Gln) amidotransferase subunit C (100 aa).

This sequence belongs to the GatC family. As to quaternary structure, heterotrimer of A, B and C subunits.

The enzyme catalyses L-glutamyl-tRNA(Gln) + L-glutamine + ATP + H2O = L-glutaminyl-tRNA(Gln) + L-glutamate + ADP + phosphate + H(+). The catalysed reaction is L-aspartyl-tRNA(Asn) + L-glutamine + ATP + H2O = L-asparaginyl-tRNA(Asn) + L-glutamate + ADP + phosphate + 2 H(+). Its function is as follows. Allows the formation of correctly charged Asn-tRNA(Asn) or Gln-tRNA(Gln) through the transamidation of misacylated Asp-tRNA(Asn) or Glu-tRNA(Gln) in organisms which lack either or both of asparaginyl-tRNA or glutaminyl-tRNA synthetases. The reaction takes place in the presence of glutamine and ATP through an activated phospho-Asp-tRNA(Asn) or phospho-Glu-tRNA(Gln). In Rickettsia rickettsii (strain Sheila Smith), this protein is Aspartyl/glutamyl-tRNA(Asn/Gln) amidotransferase subunit C.